Reading from the N-terminus, the 820-residue chain is MMLRWSGIWGLYPPRIFPSLLVVVALVGLLPVLRSHGLQLNPTASTIRGSEPPRERSIGDVTTAPSEPLHHPDDRNLTNLYIEHGAKPVRKAFPVLDIDYLHVRTPFEISLWILLACLMKIGFHVIPTISSIVPESCLLIVVGLLVGGLIKGVGETPPFLQSDVFFLFLLPPIILDAGYFLPLRQFTENLGTILIFAVVGTLWNAFFLGGLLYAVCLVGGEQINNIGLLDTLLFGSIISAVDPVAVLAVFEEIHINELLHILVFGESLLNDAVTVVLYHLFEEFASYEYVGISDIFLGFLSFFVVSLGGVFVGVVYGVIAAFTSRFTSHIRVIEPLFVFLYSYMAYLSAELFHLSGIMALIASGVVMRPYVEANISHKSHTTIKYFLKMWSSVSETLIFIFLGVSTVAGSHQWNWTFVISTLLFCLIARVLGVLVLTWFINKFRIVKLTPKDQFIIAYGGLRGAIAFSLGYLLDKKHFPMCDLFLTAIITVIFFTVFVQGMTIRPLVDLLAVKKKQETKRSINEEIHTQFLDHLLTGIEDICGHYGHHHWKDKLNRFNKKYVKKCLIAGERSKEPQLIAFYHKMEMKQAIELVESGGMGKIPSAVSTVSMQNIHPKSAASERILPALSKDKEEEIRKILRSNLQKTRQRLRSYNRHTLVADPYEEAWNQMLLRRQKARQLEQKITNYLTVPAHKLDSPTMSRARIGSDPLAYEPKADLPVITIDPASPQSPESVDLVNEELKGKVLGLKRGPRTTPEEEEEDEDGVIMIRSKEPSSPGTDDVFTPGPSDSPGSQRIQRCLSDPGPHPEPGEGEPFIPKGQ.

At 1–102 (MMLRWSGIWG…FPVLDIDYLH (102 aa)) the chain is on the extracellular side. Residues 44–71 (ASTIRGSEPPRERSIGDVTTAPSEPLHH) are disordered. Residues 103–125 (VRTPFEISLWILLACLMKIGFHV) traverse the membrane as a helical segment. Over 126 to 134 (IPTISSIVP) the chain is Cytoplasmic. The chain crosses the membrane as a helical span at residues 135–152 (ESCLLIVVGLLVGGLIKG). Topologically, residues 153–162 (VGETPPFLQS) are extracellular. The chain crosses the membrane as a helical span at residues 163–180 (DVFFLFLLPPIILDAGYF). Residues 181–190 (LPLRQFTENL) lie on the Cytoplasmic side of the membrane. A helical transmembrane segment spans residues 191 to 219 (GTILIFAVVGTLWNAFFLGGLLYAVCLVG). Over 220-226 (GEQINNI) the chain is Extracellular. A helical transmembrane segment spans residues 227–253 (GLLDTLLFGSIISAVDPVAVLAVFEEI). The Cytoplasmic portion of the chain corresponds to 254-256 (HIN). Residues 257-287 (ELLHILVFGESLLNDAVTVVLYHLFEEFASY) traverse the membrane as a helical segment. The Extracellular segment spans residues 288–291 (EYVG). The helical transmembrane segment at 292-326 (ISDIFLGFLSFFVVSLGGVFVGVVYGVIAAFTSRF) threads the bilayer. Over 327–332 (TSHIRV) the chain is Cytoplasmic. Residues 333 to 345 (IEPLFVFLYSYMA) form a helical membrane-spanning segment. Over 346 to 354 (YLSAELFHL) the chain is Extracellular. A helical membrane pass occupies residues 355 to 375 (SGIMALIASGVVMRPYVEANI). The Cytoplasmic segment spans residues 376-377 (SH). A helical transmembrane segment spans residues 378 to 408 (KSHTTIKYFLKMWSSVSETLIFIFLGVSTVA). Residues 409-414 (GSHQWN) lie on the Extracellular side of the membrane. The chain crosses the membrane as a helical span at residues 415-442 (WTFVISTLLFCLIARVLGVLVLTWFINK). Over 443-448 (FRIVKL) the chain is Cytoplasmic. A helical transmembrane segment spans residues 449–473 (TPKDQFIIAYGGLRGAIAFSLGYLL). Over 474 to 479 (DKKHFP) the chain is Extracellular. Residues 480–509 (MCDLFLTAIITVIFFTVFVQGMTIRPLVDL) traverse the membrane as a helical segment. Residues 505-571 (PLVDLLAVKK…VKKCLIAGER (67 aa)) form an interaction with TESC region. The Cytoplasmic segment spans residues 510 to 820 (LAVKKKQETK…EGEPFIPKGQ (311 aa)). A PI(4,5)P2-binding region region spans residues 513–520 (KKKQETKR). The interaction with CHP2 stretch occupies residues 519–549 (KRSINEEIHTQFLDHLLTGIEDICGHYGHHH). Residues 544–549 (HYGHHH) are confers pH-dependent PI(4,5)P2 binding. Residues 556–564 (RFNKKYVKK) form a PI(4,5)P2-binding region region. Ser603 and Ser606 each carry phosphoserine. Thr607 is modified (phosphothreonine). Phosphoserine occurs at positions 609 and 652. The segment at 637-820 (KILRSNLQKT…EGEPFIPKGQ (184 aa)) is interaction with TESC. The interval 637-820 (KILRSNLQKT…EGEPFIPKGQ (184 aa)) is interaction with CALM1. The interaction with PPP3CA stretch occupies residues 688 to 691 (LTVP). 3 positions are modified to phosphoserine: Ser697, Ser701, and Ser707. The interval 719-724 (PVITID) is interaction with PPP3CA. Phosphoserine occurs at positions 727, 730, and 733. The interval 747-820 (GLKRGPRTTP…EGEPFIPKGQ (74 aa)) is disordered. Phosphothreonine is present on residues Thr755 and Thr784. A phosphoserine mark is found at Ser790 and Ser801.

Belongs to the monovalent cation:proton antiporter 1 (CPA1) transporter (TC 2.A.36) family. Homodimer; dimerization is crucial for its function. Oligomer. Interacts with CALM1 in a calcium-dependent manner. Interacts with TESC. Interacts (via residues 504-563) with CHP1. The interaction with CHP1 occurs at the plasma membrane in a calcium-dependent manner. Interacts with CHP2. The interaction with CHP2 occurs in a calcium-dependent manner. Interacts with EZR; regulates the cytoskeletal interactions of SLC9A1 and promotes stress fiber formation. N-glycosylated and O-glycosylated in the N-terminal region. Post-translationally, ubiquitinated, leading to its degradation by the proteasome. Ubiquitination is reduced by CHP1. In terms of processing, palmitoylated; may play a major role in SLC9A1 regulation. Phosphorylation at Thr-784 increases SLC9A1 activity; specifically dephosphorylated by PPP3CA. Specifically dephosphorylated at Thr-784 by PPP3CA that negatively regulates SLC9A1 activity. Phosphorylation at Ser-652 by AKT1 reduces SLC9A1 binding to CALM1. In terms of tissue distribution, widely expressed.

The protein resides in the cell membrane. Its subcellular location is the basolateral cell membrane. The catalysed reaction is Na(+)(in) + H(+)(out) = Na(+)(out) + H(+)(in). It catalyses the reaction Li(+)(out) + H(+)(in) = Li(+)(in) + H(+)(out). It carries out the reaction Li(+)(in) + Na(+)(out) = Li(+)(out) + Na(+)(in). Activated at acidic pHs. Inhibited by cariporide and eniporide. Inhibited by amiloride and 5-amino-substituted derivatives. Phosphatidylinositol 4,5-bisphosphate (PI(4,5)P2) bind and activates SLC9A1 transporter activity. In terms of biological role, electroneutral Na(+) /H(+) antiporter that extrudes Na(+) in exchange for external protons driven by the inward sodium ion chemical gradient, protecting cells from acidification that occurs from metabolism. Exchanges intracellular H(+) ions for extracellular Na(+) in 1:1 stoichiometry. Plays a key role in maintening intracellular pH neutral and cell volume, and thus is important for cell growth, proliferation, migration and survival. In addition, can transport lithium Li(+) and also functions as a Na(+)/Li(+) antiporter. SLC9A1 also functions in membrane anchoring and organization of scaffolding complexes that coordinate signaling inputs. This chain is Sodium/hydrogen exchanger 1 (Slc9a1), found in Rattus norvegicus (Rat).